The sequence spans 127 residues: Aspartate 1-decarboxylase (127 aa).

Residue S25 is the Schiff-base intermediate with substrate; via pyruvic acid of the active site. A Pyruvic acid (Ser) modification is found at S25. A substrate-binding site is contributed by T57. Residue Y58 is the Proton donor of the active site. Position 73-75 (73-75) interacts with substrate; it reads GAA.

This sequence belongs to the PanD family. Heterooctamer of four alpha and four beta subunits. Pyruvate serves as cofactor. In terms of processing, is synthesized initially as an inactive proenzyme, which is activated by self-cleavage at a specific serine bond to produce a beta-subunit with a hydroxyl group at its C-terminus and an alpha-subunit with a pyruvoyl group at its N-terminus.

The protein resides in the cytoplasm. The catalysed reaction is L-aspartate + H(+) = beta-alanine + CO2. It participates in cofactor biosynthesis; (R)-pantothenate biosynthesis; beta-alanine from L-aspartate: step 1/1. In terms of biological role, catalyzes the pyruvoyl-dependent decarboxylation of aspartate to produce beta-alanine. The protein is Aspartate 1-decarboxylase of Bacillus velezensis (strain DSM 23117 / BGSC 10A6 / LMG 26770 / FZB42) (Bacillus amyloliquefaciens subsp. plantarum).